The sequence spans 287 residues: Putative DNA-3-methyladenine glycosylase YfjP (287 aa).

The active-site Proton acceptor is aspartate 242.

It belongs to the alkylbase DNA glycosidase AlkA family.

The enzyme catalyses Hydrolysis of alkylated DNA, releasing 3-methyladenine, 3-methylguanine, 7-methylguanine and 7-methyladenine.. Functionally, hydrolysis of the deoxyribose N-glycosidic bond to excise 3-methyladenine, 3-methylguanine, 7-methylguanine, O2-methylthymine, and O2-methylcytosine from the damaged DNA polymer formed by alkylation lesions. This Bacillus subtilis (strain 168) protein is Putative DNA-3-methyladenine glycosylase YfjP (yfjP).